Consider the following 578-residue polypeptide: Telomere repeat-binding protein 1 (578 aa).

In terms of domain architecture, Ubiquitin-like spans 293-372 (VKLRIKSFRV…HLDSLDFSLE (80 aa)). The tract at residues 440–467 (ELSSQSQPPSRKSRRSEQQQQQAAQRRI) is disordered. Residues 463-522 (AQRRIRRPFSVAEVEALVQAVEKLGTGRWRDVKLCAFEDADHRTYVDLKDKWKTLVHTAK) enclose the HTH myb-type domain. Interaction with DNA stretches follow at residues 465–469 (RRIRR), 511–515 (KDKWK), and 522–529 (KISPQQRR). The segment at residues 491–518 (WRDVKLCAFEDADHRTYVDLKDKWKTLV) is a DNA-binding region (H-T-H motif).

In terms of assembly, homodimer and heterodimer with TRP2 and TRP3. Interacts with KU70. Expressed ubiquitously. Highest expression in flowers and leaves.

The protein localises to the nucleus. Binds specifically to the plant telomeric double-stranded DNA sequences 5'-GGTTTAG-3'. At least 4 repeats of telomeric sequences are required for binding. Induces DNA bending. This chain is Telomere repeat-binding protein 1 (TRP1), found in Arabidopsis thaliana (Mouse-ear cress).